Here is a 147-residue protein sequence, read N- to C-terminus: MAKEFSRTRRIGQQLQQELAVVLQRDMKDPRIGFVTVNDVDVSRDLSYAKVFVTFFEEDKDVVQEKLNALIAAAPYIRTLVAGRMKLRVMPEIRFVYDSSLVEGMRMSNLVSQVINSDKAKQQQFGSVDDDVIENDIEESDDTEGKV.

The disordered stretch occupies residues Gln-122–Val-147. The span at Val-128–Val-147 shows a compositional bias: acidic residues.

Belongs to the RbfA family. In terms of assembly, monomer. Binds 30S ribosomal subunits, but not 50S ribosomal subunits or 70S ribosomes.

The protein localises to the cytoplasm. One of several proteins that assist in the late maturation steps of the functional core of the 30S ribosomal subunit. Associates with free 30S ribosomal subunits (but not with 30S subunits that are part of 70S ribosomes or polysomes). Required for efficient processing of 16S rRNA. May interact with the 5'-terminal helix region of 16S rRNA. This chain is Ribosome-binding factor A, found in Shewanella oneidensis (strain ATCC 700550 / JCM 31522 / CIP 106686 / LMG 19005 / NCIMB 14063 / MR-1).